We begin with the raw amino-acid sequence, 120 residues long: UPF0231 protein ETA_08290 (120 aa).

This sequence belongs to the UPF0231 family.

The polypeptide is UPF0231 protein ETA_08290 (Erwinia tasmaniensis (strain DSM 17950 / CFBP 7177 / CIP 109463 / NCPPB 4357 / Et1/99)).